Consider the following 308-residue polypeptide: Aspartate carbamoyltransferase catalytic subunit (308 aa).

Carbamoyl phosphate contacts are provided by Arg59 and Thr60. Residue Lys87 participates in L-aspartate binding. Carbamoyl phosphate is bound by residues Arg109, His137, and Gln140. 2 residues coordinate L-aspartate: Arg173 and Arg224. The carbamoyl phosphate site is built by Gly267 and Pro268.

Belongs to the aspartate/ornithine carbamoyltransferase superfamily. ATCase family. As to quaternary structure, heterododecamer (2C3:3R2) of six catalytic PyrB chains organized as two trimers (C3), and six regulatory PyrI chains organized as three dimers (R2).

It catalyses the reaction carbamoyl phosphate + L-aspartate = N-carbamoyl-L-aspartate + phosphate + H(+). The protein operates within pyrimidine metabolism; UMP biosynthesis via de novo pathway; (S)-dihydroorotate from bicarbonate: step 2/3. Catalyzes the condensation of carbamoyl phosphate and aspartate to form carbamoyl aspartate and inorganic phosphate, the committed step in the de novo pyrimidine nucleotide biosynthesis pathway. This is Aspartate carbamoyltransferase catalytic subunit from Helicobacter acinonychis (strain Sheeba).